The sequence spans 262 residues: MKSTVYHPYHLVDPSPWPYVGACGALFITVGSVVYFHYSQTWVLLMGAITLSLTMIVWWRDVIREATFQGLHTMVVKQGLKYGMLLFILSEVLFFFSFFWAFFHSSIAPNIELGAVWPPQGINPLNPFSVPLLNTAVLLSSGATVTWAHHALISGKKTEAINGLTITVVLGLIFTGLQAMEYYEAPFAISDSVYGSTFFVATGFHGMHVIIGTTFLAVCLARLVYHQFTRHHHLGFEAASWYWHFVDVVWLFLYICIYWWGS.

7 consecutive transmembrane segments (helical) span residues 16–36 (PWPY…VVYF), 39–59 (SQTW…IVWW), 83–103 (GMLL…WAFF), 128–148 (FSVP…VTWA), 160–180 (AING…LQAM), 198–218 (FFVA…FLAV), and 241–261 (WYWH…YWWG).

The protein belongs to the cytochrome c oxidase subunit 3 family. In terms of assembly, component of the cytochrome c oxidase (complex IV, CIV), a multisubunit enzyme composed of a catalytic core of 3 subunits and several supernumerary subunits. The complex exists as a monomer or a dimer and forms supercomplexes (SCs) in the inner mitochondrial membrane with ubiquinol-cytochrome c oxidoreductase (cytochrome b-c1 complex, complex III, CIII).

Its subcellular location is the mitochondrion inner membrane. The catalysed reaction is 4 Fe(II)-[cytochrome c] + O2 + 8 H(+)(in) = 4 Fe(III)-[cytochrome c] + 2 H2O + 4 H(+)(out). Its function is as follows. Component of the cytochrome c oxidase, the last enzyme in the mitochondrial electron transport chain which drives oxidative phosphorylation. The respiratory chain contains 3 multisubunit complexes succinate dehydrogenase (complex II, CII), ubiquinol-cytochrome c oxidoreductase (cytochrome b-c1 complex, complex III, CIII) and cytochrome c oxidase (complex IV, CIV), that cooperate to transfer electrons derived from NADH and succinate to molecular oxygen, creating an electrochemical gradient over the inner membrane that drives transmembrane transport and the ATP synthase. Cytochrome c oxidase is the component of the respiratory chain that catalyzes the reduction of oxygen to water. Electrons originating from reduced cytochrome c in the intermembrane space (IMS) are transferred via the dinuclear copper A center (CU(A)) of subunit 2 and heme A of subunit 1 to the active site in subunit 1, a binuclear center (BNC) formed by heme A3 and copper B (CU(B)). The BNC reduces molecular oxygen to 2 water molecules using 4 electrons from cytochrome c in the IMS and 4 protons from the mitochondrial matrix. The protein is Cytochrome c oxidase subunit 3 (COIII) of Metridium senile (Brown sea anemone).